Here is a 903-residue protein sequence, read N- to C-terminus: Disintegrin and metalloproteinase domain-containing protein 12 (903 aa).

Positions 1–31 are cleaved as a signal peptide; sequence MAERPARRAPPARALLLALAGALLAPRAARG. The propeptide occupies 32 to 205; sequence MSLWDQRGTY…SQMRARRHKR (174 aa). N112, N147, and N157 each carry an N-linked (GlcNAc...) asparagine glycan. The Cysteine switch signature appears at 175 to 182; it reads GLCGSQHN. Residue C177 participates in Zn(2+) binding. N182 and N185 each carry an N-linked (GlcNAc...) asparagine glycan. The Extracellular segment spans residues 206 to 706; the sequence is ETLKMTKYVE…GPIRQADNQG (501 aa). Residues 212–414 enclose the Peptidase M12B domain; it reads KYVELVIVAD…GMGMCLFNLP (203 aa). Cystine bridges form between C323–C409, C365–C393, and C367–C376. H348 is a binding site for Zn(2+). The active site involves E349. Positions 352 and 358 each coordinate Zn(2+). Residues 422-508 enclose the Disintegrin domain; sequence GRKCGNGYVE…HCPANVYLHD (87 aa). N-linked (GlcNAc...) asparagine glycosylation occurs at N450. C480 and C500 are disulfide-bonded. A glycan (N-linked (GlcNAc...) asparagine) is linked at N649. The EGF-like domain maps to 654 to 686; it reads GVHKCAMQCHGRGVCNNRKNCHCEAHWAPPFCD. Intrachain disulfides connect C658–C668, C662–C674, and C676–C685. A helical membrane pass occupies residues 707 to 727; it reads LTVGILVSILCLLAAGFVVYL. Topologically, residues 728–903 are cytoplasmic; sequence KRKTLMRLLF…PRPSHNAYIK (176 aa). Disordered stretches follow at residues 753-790 and 819-903; these read SRTPSGPHLGQAHHTPGKGLLMNRAPHFNTPKDRHSLK and HQTP…AYIK. 2 short sequence motifs (SH3-binding; class II) span residues 824 to 830 and 846 to 852; these read APSGPAR and KPSPPQK. 3 short sequence motifs (SH3-binding; class I) span residues 830 to 837, 852 to 858, and 881 to 887; these read RPLPASPA, KPLPADP, and RPAPIRP. The span at 847 to 856 shows a compositional bias: pro residues; the sequence is PSPPQKPLPA. Y901 is subject to Phosphotyrosine; by SRC.

In terms of assembly, interacts with alpha-actinin-2 and with syndecans. Interacts with SH3PXD2A. Interacts with FST3. Interacts with RACK1; the interaction is required for PKC-dependent translocation of ADAM12 to the cell membrane. Zn(2+) is required as a cofactor. In terms of processing, the precursor is cleaved by a furin endopeptidase. Expressed during early developing mesenchymal cells that give rise to skeletal muscle, bones and visceral organs. Not expressed in adult normal muscle but expressed in regenerating muscle.

It is found in the membrane. Functionally, involved in skeletal muscle regeneration, specifically at the onset of cell fusion. Also involved in macrophage-derived giant cells (MGC) and osteoclast formation from mononuclear precursors. The chain is Disintegrin and metalloproteinase domain-containing protein 12 (Adam12) from Mus musculus (Mouse).